The sequence spans 142 residues: Small heat shock protein IbpB (142 aa).

The region spanning Thr26 to Arg137 is the sHSP domain.

Belongs to the small heat shock protein (HSP20) family. As to quaternary structure, homodimer. Forms homomultimers of about 100-150 subunits at optimal growth temperatures. Conformation changes to oligomers at high temperatures or high ionic concentrations. The decrease in size of the multimers is accompanied by an increase in chaperone activity.

It localises to the cytoplasm. Functionally, associates with aggregated proteins, together with IbpA, to stabilize and protect them from irreversible denaturation and extensive proteolysis during heat shock and oxidative stress. Aggregated proteins bound to the IbpAB complex are more efficiently refolded and reactivated by the ATP-dependent chaperone systems ClpB and DnaK/DnaJ/GrpE. Its activity is ATP-independent. This is Small heat shock protein IbpB from Enterobacter sp. (strain 638).